The primary structure comprises 467 residues: 55 kDa erythrocyte membrane protein (467 aa).

Positions 73 to 154 (EVAFEKNQSE…VVTMKIIPRP (82 aa)) constitute a PDZ domain. The region spanning 160–230 (PCEMYMRGQF…PSPELQEWRA (71 aa)) is the SH3 domain. One can recognise a Guanylate kinase-like domain in the interval 283–452 (RKTLVLIGAP…SVKIVEEALE (170 aa)).

Belongs to the MAGUK family. In terms of processing, extensively palmitoylated.

It localises to the membrane. Its function is as follows. May play a role in the regulation of neutrophil polarization. The sequence is that of 55 kDa erythrocyte membrane protein (mpp1) from Takifugu rubripes (Japanese pufferfish).